Consider the following 526-residue polypeptide: Cell adhesion molecule CEACAM1 (526 aa).

Residues 1–34 (MGHLSAPLHRVRVPWQGLLLTASLLTFWNPPTTA) form the signal peptide. Pyrrolidone carboxylic acid is present on Q35. The region spanning 35–142 (QLTTESMPFN…EATGQFHVYP (108 aa)) is the Ig-like V-type domain. At 35–428 (QLTTESMPFN…LPQENGLSPG (394 aa)) the chain is on the extracellular side. A required for homophilic binding region spans residues 39-142 (ESMPFNVAEG…EATGQFHVYP (104 aa)). N104, N111, N115, N152, N182, N197, N208, N224, N232, N254, N274, N288, N292, N302, N309, N345, N351, N363, N378, and N405 each carry an N-linked (GlcNAc...) asparagine glycan. Ig-like C2-type domains lie at 145 to 232 (PKPS…VTLN), 237 to 317 (PDTP…KTII), and 323 to 413 (PVVA…IMLN). C167 and C215 form a disulfide bridge. C259 and C299 are oxidised to a cystine. Residues C348 and C396 are joined by a disulfide bond. Residues 429 to 452 (AIAGIVIGVVALVALIAVALACFL) traverse the membrane as a helical segment. The interaction with calmodulin stretch occupies residues 450–462 (CFLHFGKTGRASD). The interval 452–526 (LHFGKTGRAS…EIIYSEVKKQ (75 aa)) is interaction with FLNA. Topologically, residues 453 to 526 (HFGKTGRASD…EIIYSEVKKQ (74 aa)) are cytoplasmic. The segment covering 461-482 (SDQRDLTEHKPSVSNHTQDHSN) has biased composition (basic and acidic residues). The interval 461–513 (SDQRDLTEHKPSVSNHTQDHSNDPPNKMNEVTYSTLNFEAQQPTQPTSASPSL) is disordered. Residues 489–513 (NEVTYSTLNFEAQQPTQPTSASPSL) are compositionally biased toward polar residues. The tract at residues 489–526 (NEVTYSTLNFEAQQPTQPTSASPSLTATEIIYSEVKKQ) is required for interaction with PTPN11 and PTPN6 and for control of phosphorylation level. Y493 is modified (phosphotyrosine; by SRC, LCK, INSR and EGFR). A Phosphoserine modification is found at S508. Y520 is modified (phosphotyrosine; by INSR, SRC and LCK). The segment at 520-523 (YSEV) is essential for interaction with PTPN11 and PTPN6.

This sequence belongs to the immunoglobulin superfamily. CEA family. In terms of assembly, monomer. Oligomer. Heterodimer. Homodimer. Cis-dimer/oligomer (via Ig-like C2-type and/or via cytoplasmic domains); induced by trans-homophilic cell adhesion through an allosteric mechanism transmitted by the Ig-like V-type domain, and is regulated by intracellular calcium and calmodulin. Interacts (via cytoplasmic domain) with calmodulin in a calcium dependent manner; reduces homophilic cell adhesion through dissociation of dimer. Isoform 1 interacts (via cytoplasmic domain) with PTPN11 (preferentially) and PTPN6; cis-homodimer form is preferred; this interaction is decreased by formation of Isoform 1 /Isoform 8 cis-heterodimers and is dependent on the monomer/dimer equilibrium; this interaction is phosphorylation-dependent. Isoform 1 interacts with LYN. Isoform 1 interacts (via cytoplasmic domain) with SRC (via SH2 domain); this interaction is regulated by trans-homophilic cell adhesion. Isoform 1 interacts (via cytoplasmic domain) with LCK; mediates phosphorylation at Tyr-493 and Tyr-520 resulting in PTPN6 association. Isoform 1 interacts with PTPN6; this interaction is phosphorylation-dependent and causes a profound decrease in TCR stimulation-induced CD247 and ZAP70 phosphorylation. Isoform 1 interacts with TCR/CD3 complex through TCR beta chain and CD3E; colocalizes at the cell surface and upon stimulation of the TCR/CD3 complex recruits PTPN6 in the TCR/CD3 complex, resulting in dephosphorylation of CD247 and ZAP70. Isoform 1 interacts (via cytoplasmic domain) with SHC1 (via SH2 domain); SHC1 mediates interaction with INSR or EGFR in a Ser-508 phosphorylation-dependent manner. Isoform 1 interacts with EGFR; the interaction is indirect. Isoform 1 interacts with CSF3R; down-regulates the CSF3R-STAT3 pathway through recruitment of PTPN6 that dephosphorylates CSF3R. Isoform 1 (phosphorylated form) interacts with TLR4 and SYK; recruits PTPN6 that dephosphorylates SYK, reducing the production of reactive oxygen species (ROS) and lysosome disruption, leading to a reduction of the inflammasome activity. Isoform 1 interacts with FLNA; inhibits cell migration and cell scattering by interfering with the interaction of FLNA with RALA. Isoform 1 interacts (via cytoplasmic domain) with PXN; the interaction is phosphotyrosyl-dependent. Isoform 1 interacts with KLRK1; recruits PTPN6 that dephosphorylates VAV1. Isoform 1 interacts with CEACAM8. Isoform 1 interacts with FASN; this interaction is insulin and phosphorylation-dependent; reduces fatty-acid synthase activity. Interacts (via Ig-like V-type) with HAVCR2 (via Ig-like V-type); facilitates the maturation and cell surface expression of HAVCR2 thereby regulating T cell tolerance induction. Isoform 8 interacts (via the cytoplasmic domain) with ANXA2; this interaction is regulated by phosphorylation and appears in the AIIt complex. Interacts (via Lewis X moieties) with CD209 (via C-type lectin domain); this interaction is regulated by the glycosylation pattern of CEACAM1 on cell types and regulates contact between dendritic cells and neutrophils. Phosphorylated on serine and tyrosine. Isoform 1 is phosphorylated on tyrosine by Src family kinases like SRC and LCK and by receptor like CSF3R, EGFR and INSR upon stimulation. Phosphorylated at Ser-508; mediates activity. Phosphorylated at Tyr-493; regulates activity. Phosphorylated at Tyr-493 by EGFR and INSR upon stimulation; this phosphorylation is Ser-508-phosphorylation-dependent; mediates cellular internalization; increases interaction with downstream proteins like SHC1 and FASN. Phosphorylated at Tyr-493 and Tyr-520 by LCK; mediates PTPN6 association and is regulated by homophilic ligation of CEACAM1 in the absence of T cell activation. Phosphorylated at Tyr-520; mediates interaction with PTPN11. Post-translationally, phosphorylated on serine and threonine. Expressed in columnar epithelial cells of the colon (at protein level). The predominant forms expressed by T cells are those containing a long cytoplasmic domain. Expressed in granulocytes and lymphocytes. Leukocytes only express isoforms 6 and isoform 1.

It localises to the cell membrane. The protein resides in the lateral cell membrane. Its subcellular location is the apical cell membrane. The protein localises to the basal cell membrane. It is found in the cell junction. It localises to the adherens junction. The protein resides in the secreted. Its subcellular location is the cytoplasmic vesicle. The protein localises to the secretory vesicle membrane. It is found in the cell projection. It localises to the microvillus membrane. Its function is as follows. Cell adhesion protein that mediates homophilic cell adhesion in a calcium-independent manner. Plays a role as coinhibitory receptor in immune response, insulin action and also functions as an activator during angiogenesis. Its coinhibitory receptor function is phosphorylation- and PTPN6 -dependent, which in turn, suppress signal transduction of associated receptors by dephosphorylation of their downstream effectors. Plays a role in immune response, of T cells, natural killer (NK) and neutrophils. Upon TCR/CD3 complex stimulation, inhibits TCR-mediated cytotoxicity by blocking granule exocytosis by mediating homophilic binding to adjacent cells, allowing interaction with and phosphorylation by LCK and interaction with the TCR/CD3 complex which recruits PTPN6 resulting in dephosphorylation of CD247 and ZAP70. Also inhibits T cell proliferation and cytokine production through inhibition of JNK cascade and plays a crucial role in regulating autoimmunity and anti-tumor immunity by inhibiting T cell through its interaction with HAVCR2. Upon natural killer (NK) cells activation, inhibit KLRK1-mediated cytolysis of CEACAM1-bearing tumor cells by trans-homophilic interactions with CEACAM1 on the target cell and lead to cis-interaction between CEACAM1 and KLRK1, allowing PTPN6 recruitment and then VAV1 dephosphorylation. Upon neutrophils activation negatively regulates IL1B production by recruiting PTPN6 to a SYK-TLR4-CEACAM1 complex, that dephosphorylates SYK, reducing the production of reactive oxygen species (ROS) and lysosome disruption, which in turn, reduces the activity of the inflammasome. Down-regulates neutrophil production by acting as a coinhibitory receptor for CSF3R by down-regulating the CSF3R-STAT3 pathway through recruitment of PTPN6 that dephosphorylates CSF3R. Also regulates insulin action by promoting INS clearance and regulating lipogenesis in liver through regulating insulin signaling. Upon INS stimulation, undergoes phosphorylation by INSR leading to INS clearance by increasing receptor-mediated insulin endocytosis. This inernalization promotes interaction with FASN leading to receptor-mediated insulin degradation and to reduction of FASN activity leading to negative regulation of fatty acid synthesis. INSR-mediated phosphorylation also provokes a down-regulation of cell proliferation through SHC1 interaction resulting in decrease coupling of SHC1 to the MAPK3/ERK1-MAPK1/ERK2 and phosphatidylinositol 3-kinase pathways. Functions as activator in angiogenesis by promoting blood vessel remodeling through endothelial cell differentiation and migration and in arteriogenesis by increasing the number of collateral arteries and collateral vessel calibers after ischemia. Also regulates vascular permeability through the VEGFR2 signaling pathway resulting in control of nitric oxide production. Down-regulates cell growth in response to EGF through its interaction with SHC1 that mediates interaction with EGFR resulting in decrease coupling of SHC1 to the MAPK3/ERK1-MAPK1/ERK2 pathway. Negatively regulates platelet aggregation by decreasing platelet adhesion on type I collagen through the GPVI-FcRgamma complex. Inhibits cell migration and cell scattering through interaction with FLNA; interferes with the interaction of FLNA with RALA. Mediates bile acid transport activity in a phosphorylation dependent manner. Negatively regulates osteoclastogenesis. In terms of biological role, cell adhesion protein that mediates homophilic cell adhesion in a calcium-independent manner. Promotes populations of T cells regulating IgA production and secretion associated with control of the commensal microbiota and resistance to enteropathogens. This is Cell adhesion molecule CEACAM1 from Homo sapiens (Human).